Reading from the N-terminus, the 1714-residue chain is Collagen alpha-1(XXIV) chain (1714 aa).

Positions 1–35 are cleaved as a signal peptide; it reads MHLRAHRTRRGKVSPTAKTKSLLHFIVLCVAGVVV. The Laminin G-like domain occupies 141–217; it reads KLVVHIRGKQ…MNNNSIHFEG (77 aa). 3 N-linked (GlcNAc...) asparagine glycosylation sites follow: Asn-155, Asn-321, and Asn-376. Collagen-like domains lie at 487-542, 552-611, 660-719, 741-797, 798-857, 858-887, 888-947, 948-1007, 1011-1052, 1053-1112, 1116-1170, 1172-1196, 1201-1249, 1252-1306, 1309-1353, 1354-1413, and 1420-1479; these read LRGP…PGFS, GDQG…EGNP, GPAG…KGEQ, GPPG…RGPP, GPPG…TGPV, GLPG…QGEK, GVMG…KGEK, GDQG…PGEM, GPPG…PGAP, GEEG…PGQR, GKKG…GIPG, RGHQ…PGED, GPPG…GEPG, GEQG…GNPG, GPPG…QGPK, GEQG…EGDA, and GPKG…PGPR. Residues 487-1481 form a disordered region; the sequence is LRGPKGDTGP…PPGAPGPRKQ (995 aa). Pro residues predominate over residues 496–505; that stretch reads PPGPPGPAGI. Low complexity-rich tracts occupy residues 574 to 587 and 685 to 701; these read HPGL…QGIP and SVGP…PGPM. Pro residues predominate over residues 893-902; the sequence is PGPPGVPGPI. Positions 985–1019 are enriched in low complexity; the sequence is DRGLPGEPGLRGLQGDVGPPGEMGMEGPPGTEGES. 2 stretches are compositionally biased toward gly residues: residues 1035-1044 and 1065-1074; these read GSVGGTGEPG and GVPGGRGLPG. Low complexity-rich tracts occupy residues 1132 to 1145 and 1174 to 1186; these read SRGP…SGPK and HQGQ…LPGP. Positions 1256–1266 are enriched in basic and acidic residues; the sequence is LKGERGSEGNK. Over residues 1271 to 1293 the composition is skewed to low complexity; the sequence is APGPSGKPGIPGLQGLLGPKGIQ. Residues 1318 to 1327 are compositionally biased toward gly residues; that stretch reads GIRGGPGRTG. Over residues 1466–1476 the composition is skewed to pro residues; the sequence is QPGPPGPPGAP. In terms of domain architecture, Fibrillar collagen NC1 spans 1515–1714; that stretch reads EEIFKTLNYL…YIDSSSVCFL (200 aa).

It belongs to the fibrillar collagen family.

Its subcellular location is the secreted. It is found in the extracellular space. The protein resides in the extracellular matrix. Functionally, may participate in regulating type I collagen fibrillogenesis at specific anatomical locations during fetal development. The sequence is that of Collagen alpha-1(XXIV) chain (COL24A1) from Homo sapiens (Human).